Here is a 161-residue protein sequence, read N- to C-terminus: Vitamin K epoxide reductase complex subunit 1 (161 aa).

Residues 1–9 (MGTTWRSPG) lie on the Cytoplasmic side of the membrane. A helical transmembrane segment spans residues 10 to 29 (LVRLALCLAGLALSLYALHV). The Lumenal portion of the chain corresponds to 30–80 (KAARARDENYRALCDVGTAISCSRVFSSRWGRGFGLVEHMLGADSVLNQSN). The cysteines at positions 43 and 51 are disulfide-linked. Residue N80 participates in (S)-warfarin binding. The chain crosses the membrane as a helical span at residues 81–95 (SIFGCLFYTLQLLLG). Residues 96-100 (CLRGR) lie on the Cytoplasmic side of the membrane. Residues 101-128 (WASILLVLSSLVSVAGSVYLAWILFFVL) traverse the membrane as a helical segment. The Lumenal segment spans residues 129–131 (YDF). C132 and C135 form a disulfide bridge. The helical transmembrane segment at 132-153 (CIVCITTYAINVGLMLLSFQKV) threads the bilayer. Residues C135 and Y139 each coordinate phylloquinone. Residue Y139 participates in (S)-warfarin binding. Residues 154–161 (PEHKTKKH) lie on the Cytoplasmic side of the membrane.

This sequence belongs to the VKOR family. Detected in liver.

Its subcellular location is the endoplasmic reticulum membrane. It carries out the reaction phylloquinone + [protein]-disulfide + H2O = 2,3-epoxyphylloquinone + [protein]-dithiol. The catalysed reaction is phylloquinol + [protein]-disulfide = phylloquinone + [protein]-dithiol. Inhibited by warfarin (coumadin). Warfarin locks VKORC1 in both redox states into the closed conformation. In terms of biological role, involved in vitamin K metabolism. Catalytic subunit of the vitamin K epoxide reductase (VKOR) complex which reduces inactive vitamin K 2,3-epoxide to active vitamin K. Vitamin K is required for the gamma-carboxylation of various proteins, including clotting factors, and is required for normal blood coagulation, but also for normal bone development. The polypeptide is Vitamin K epoxide reductase complex subunit 1 (Vkorc1) (Mus musculus (Mouse)).